We begin with the raw amino-acid sequence, 310 residues long: Protein-L-isoaspartate O-methyltransferase (310 aa).

Disordered regions lie at residues 1-46 and 60-79; these read MSGE…DKPA and ALPGTAAAKPATAPKPTVLK. Residues 14 to 34 show a composition bias toward basic and acidic residues; the sequence is EDLKRAPRKSEVRSGSGERHA. Low complexity predominate over residues 35–46; sequence ASAVPKAADKPA. Ser-157 is a catalytic residue.

It belongs to the methyltransferase superfamily. L-isoaspartyl/D-aspartyl protein methyltransferase family.

It localises to the cytoplasm. It carries out the reaction [protein]-L-isoaspartate + S-adenosyl-L-methionine = [protein]-L-isoaspartate alpha-methyl ester + S-adenosyl-L-homocysteine. Catalyzes the methyl esterification of L-isoaspartyl residues in peptides and proteins that result from spontaneous decomposition of normal L-aspartyl and L-asparaginyl residues. It plays a role in the repair and/or degradation of damaged proteins. The chain is Protein-L-isoaspartate O-methyltransferase from Burkholderia ambifaria (strain ATCC BAA-244 / DSM 16087 / CCUG 44356 / LMG 19182 / AMMD) (Burkholderia cepacia (strain AMMD)).